The primary structure comprises 342 residues: Aspartate carbamoyltransferase catalytic subunit (342 aa).

Arg59 and Thr60 together coordinate carbamoyl phosphate. Lys87 contacts L-aspartate. 3 residues coordinate carbamoyl phosphate: Arg109, His142, and Gln145. Residues Arg182 and Arg253 each coordinate L-aspartate. Carbamoyl phosphate is bound by residues Gly294 and Pro295.

It belongs to the aspartate/ornithine carbamoyltransferase superfamily. ATCase family. As to quaternary structure, heterododecamer (2C3:3R2) of six catalytic PyrB chains organized as two trimers (C3), and six regulatory PyrI chains organized as three dimers (R2).

It carries out the reaction carbamoyl phosphate + L-aspartate = N-carbamoyl-L-aspartate + phosphate + H(+). It functions in the pathway pyrimidine metabolism; UMP biosynthesis via de novo pathway; (S)-dihydroorotate from bicarbonate: step 2/3. Catalyzes the condensation of carbamoyl phosphate and aspartate to form carbamoyl aspartate and inorganic phosphate, the committed step in the de novo pyrimidine nucleotide biosynthesis pathway. This Synechococcus sp. (strain WH7803) protein is Aspartate carbamoyltransferase catalytic subunit.